We begin with the raw amino-acid sequence, 434 residues long: Protein arginine N-methyltransferase 2 (434 aa).

Residues I155–E198 are disordered. Residues D178 to P193 are compositionally biased toward basic and acidic residues. In terms of domain architecture, RMT2 spans P193–V434. S-adenosyl-L-methionine-binding positions include Y200, M230, F258–I263, E279–H281, W306–Q307, and D327.

It belongs to the class I-like SAM-binding methyltransferase superfamily. RMT2 methyltransferase family. Monomer.

It is found in the cytoplasm. The protein localises to the nucleus. Functionally, S-adenosyl-L-methionine-dependent protein-arginine N-methyltransferase that methylates the delta-nitrogen atom of arginine residues to form N5-methylarginine (type IV) in target proteins. Monomethylates ribosomal protein L12. The chain is Protein arginine N-methyltransferase 2 from Debaryomyces hansenii (strain ATCC 36239 / CBS 767 / BCRC 21394 / JCM 1990 / NBRC 0083 / IGC 2968) (Yeast).